A 104-amino-acid polypeptide reads, in one-letter code: Gallinacin-11 (104 aa).

A signal peptide spans 1 to 22 (MKLFSCLMALLLFLLQAVPGLG). Intrachain disulfides connect C30–C60, C37–C53, and C43–C61.

This sequence belongs to the beta-defensin family. As to expression, detected in outer membrane of the vitelline layer of the egg (at protein level). Expressed in the liver, gall bladder, kidney, testis, ovary and male and female reproductive tracts. Expressed in the ovarian stroma, but not in the ovarian follicles. No expression is detected in bone marrow.

It is found in the secreted. The protein resides in the cytoplasmic granule. In terms of biological role, has bactericidal activity. In Gallus gallus (Chicken), this protein is Gallinacin-11 (GAL11).